The sequence spans 354 residues: UDP-3-O-acylglucosamine N-acyltransferase (354 aa).

His-247 serves as the catalytic Proton acceptor.

It belongs to the transferase hexapeptide repeat family. LpxD subfamily. Homotrimer.

The catalysed reaction is a UDP-3-O-[(3R)-3-hydroxyacyl]-alpha-D-glucosamine + a (3R)-hydroxyacyl-[ACP] = a UDP-2-N,3-O-bis[(3R)-3-hydroxyacyl]-alpha-D-glucosamine + holo-[ACP] + H(+). Its pathway is bacterial outer membrane biogenesis; LPS lipid A biosynthesis. Its function is as follows. Catalyzes the N-acylation of UDP-3-O-acylglucosamine using 3-hydroxyacyl-ACP as the acyl donor. Is involved in the biosynthesis of lipid A, a phosphorylated glycolipid that anchors the lipopolysaccharide to the outer membrane of the cell. The sequence is that of UDP-3-O-acylglucosamine N-acyltransferase from Chlamydia trachomatis serovar L2b (strain UCH-1/proctitis).